Reading from the N-terminus, the 314-residue chain is Putative gluconeogenesis factor (314 aa).

Belongs to the gluconeogenesis factor family.

The protein localises to the cytoplasm. In terms of biological role, required for morphogenesis under gluconeogenic growth conditions. This chain is Putative gluconeogenesis factor, found in Thermotoga maritima (strain ATCC 43589 / DSM 3109 / JCM 10099 / NBRC 100826 / MSB8).